The following is a 234-amino-acid chain: tRNA1(Val) (adenine(37)-N6)-methyltransferase (234 aa).

The protein belongs to the methyltransferase superfamily. tRNA (adenine-N(6)-)-methyltransferase family.

The protein resides in the cytoplasm. The catalysed reaction is adenosine(37) in tRNA1(Val) + S-adenosyl-L-methionine = N(6)-methyladenosine(37) in tRNA1(Val) + S-adenosyl-L-homocysteine + H(+). Its function is as follows. Specifically methylates the adenine in position 37 of tRNA(1)(Val) (anticodon cmo5UAC). The chain is tRNA1(Val) (adenine(37)-N6)-methyltransferase from Aliivibrio fischeri (strain ATCC 700601 / ES114) (Vibrio fischeri).